A 199-amino-acid polypeptide reads, in one-letter code: Recombination protein RecR (199 aa).

The segment at 57–72 (CRQCRTLTEDELCPQC) adopts a C4-type zinc-finger fold. A Toprim domain is found at 80–174 (SLLCVVQSPV…TISRIAHGVP (95 aa)).

This sequence belongs to the RecR family.

Its function is as follows. May play a role in DNA repair. It seems to be involved in an RecBC-independent recombinational process of DNA repair. It may act with RecF and RecO. This Stutzerimonas stutzeri (strain A1501) (Pseudomonas stutzeri) protein is Recombination protein RecR.